The following is a 445-amino-acid chain: Phosphoglucosamine mutase (445 aa).

Serine 102 (phosphoserine intermediate) is an active-site residue. The Mg(2+) site is built by serine 102, aspartate 241, aspartate 243, and aspartate 245. Serine 102 is modified (phosphoserine).

Belongs to the phosphohexose mutase family. Requires Mg(2+) as cofactor. In terms of processing, activated by phosphorylation.

The enzyme catalyses alpha-D-glucosamine 1-phosphate = D-glucosamine 6-phosphate. Functionally, catalyzes the conversion of glucosamine-6-phosphate to glucosamine-1-phosphate. The polypeptide is Phosphoglucosamine mutase (Salmonella paratyphi A (strain ATCC 9150 / SARB42)).